The primary structure comprises 744 residues: Palmitoyltransferase ZDHHC5-A (744 aa).

Residues 1-11 (MPSGSMSGGVS) show a composition bias toward gly residues. The disordered stretch occupies residues 1-25 (MPSGSMSGGVSGPTSPPHPTVPSRP). Over 1 to 30 (MPSGSMSGGVSGPTSPPHPTVPSRPLRPSR) the chain is Cytoplasmic. The chain crosses the membrane as a helical span at residues 31-51 (YVPVSAATAFLVGSTTLFFCF). Topologically, residues 52–61 (TCPWLSEQFS) are extracellular. A helical transmembrane segment spans residues 62–82 (VAVPIYNGVMFMFVLANFCMA). Over 83-167 (TFMDPGIFPR…IGRRNYRYFF (85 aa)) the chain is Cytoplasmic. In terms of domain architecture, DHHC spans 121 to 171 (KWCSTCRFYRPPRCSHCSVCDNCVEDFDHHCPWVNNCIGRRNYRYFFLFLL). The S-palmitoyl cysteine intermediate role is filled by Cys151. A helical membrane pass occupies residues 168-188 (LFLLSLTAHIMGVFGFGLLFI). Topologically, residues 189 to 208 (LYHTQQLDRVHSAVTMAVMC) are extracellular. A helical membrane pass occupies residues 209-229 (VAGLFFIPVAGLTGFHVVLVA). The Cytoplasmic portion of the chain corresponds to 230–744 (RGRTTNEQVT…VGGTTYEISV (515 aa)). Disordered regions lie at residues 314-523 (SLEM…PVVG), 556-645 (QHAV…SLSY), and 664-744 (SVAG…EISV). The segment covering 369–393 (TYSSPGKNHTALTHAYANQSSQQPG) has biased composition (polar residues). Basic and acidic residues predominate over residues 398–413 (PSLDGREGGGAERSGA). Residues 415–428 (RTGGGPGGPPGSGI) are compositionally biased toward gly residues. Over residues 460–501 (THNAPPSEATTSTSYKSLANQTPPQAARNGSLSYDSLLTPSE) the composition is skewed to polar residues. The span at 571–584 (PERERERLLHDSQA) shows a compositional bias: basic and acidic residues. Residues 585–601 (QHHHHHHHHHHHHRPPR) are compositionally biased toward basic residues. 2 stretches are compositionally biased toward low complexity: residues 621–630 (RTRSTDTTHP) and 689–723 (PKPS…SPAH). Residues 725 to 737 (PGGGVKKVTGVGG) show a composition bias toward gly residues.

This sequence belongs to the DHHC palmitoyltransferase family. ERF2/ZDHHC9 subfamily.

It localises to the cell membrane. It carries out the reaction L-cysteinyl-[protein] + hexadecanoyl-CoA = S-hexadecanoyl-L-cysteinyl-[protein] + CoA. Its function is as follows. Palmitoyltransferase that catalyzes the addition of palmitate onto various protein substrates and is involved in a variety of cellular processes. The chain is Palmitoyltransferase ZDHHC5-A from Danio rerio (Zebrafish).